The sequence spans 195 residues: Protein GrpE (195 aa).

This sequence belongs to the GrpE family. Homodimer.

The protein localises to the cytoplasm. Its function is as follows. Participates actively in the response to hyperosmotic and heat shock by preventing the aggregation of stress-denatured proteins, in association with DnaK and GrpE. It is the nucleotide exchange factor for DnaK and may function as a thermosensor. Unfolded proteins bind initially to DnaJ; upon interaction with the DnaJ-bound protein, DnaK hydrolyzes its bound ATP, resulting in the formation of a stable complex. GrpE releases ADP from DnaK; ATP binding to DnaK triggers the release of the substrate protein, thus completing the reaction cycle. Several rounds of ATP-dependent interactions between DnaJ, DnaK and GrpE are required for fully efficient folding. This is Protein GrpE from Francisella tularensis subsp. holarctica (strain OSU18).